The following is a 378-amino-acid chain: Alkaline elastase YaB (378 aa).

Positions 1–27 (MNKKMGKIVAGTALIISVAFSSSIAQA) are cleaved as a signal peptide. Residues 28 to 110 (AEEAKEKYLI…IEEDAEVTTM (83 aa)) constitute a propeptide that is removed on maturation. Gln-111 serves as a coordination point for Ca(2+). Positions 114-377 (PWGINRVQAP…SGLVNAEAAT (264 aa)) constitute a Peptidase S8 domain. Asp-141 serves as the catalytic Charge relay system. Asp-149 serves as a coordination point for Ca(2+). The active-site Charge relay system is the His-171. Ca(2+)-binding residues include Leu-182, Asn-184, Ile-186, Val-188, Ala-272, Tyr-274, and Ala-277. The active-site Charge relay system is the Ser-324.

This sequence belongs to the peptidase S8 family. The cofactor is Ca(2+).

Its subcellular location is the secreted. Functionally, digests elastin efficiently, has a substrate preference for Ala in P1 position. The chain is Alkaline elastase YaB (ale) from Bacillus sp. (strain YaB).